The sequence spans 283 residues: tRNA pseudouridine synthase A (283 aa).

The active-site Nucleophile is Asp52. Tyr148 lines the substrate pocket.

The protein belongs to the tRNA pseudouridine synthase TruA family. In terms of assembly, homodimer.

It carries out the reaction uridine(38/39/40) in tRNA = pseudouridine(38/39/40) in tRNA. Its function is as follows. Formation of pseudouridine at positions 38, 39 and 40 in the anticodon stem and loop of transfer RNAs. In Orientia tsutsugamushi (strain Ikeda) (Rickettsia tsutsugamushi), this protein is tRNA pseudouridine synthase A.